Consider the following 1438-residue polypeptide: DNA polymerase III PolC-type (1438 aa).

In terms of domain architecture, Exonuclease spans 422-578 (YVVFDVETTG…YDTEATAYIF (157 aa)).

Belongs to the DNA polymerase type-C family. PolC subfamily.

The protein resides in the cytoplasm. It catalyses the reaction DNA(n) + a 2'-deoxyribonucleoside 5'-triphosphate = DNA(n+1) + diphosphate. Required for replicative DNA synthesis. This DNA polymerase also exhibits 3' to 5' exonuclease activity. The protein is DNA polymerase III PolC-type of Staphylococcus aureus (strain MSSA476).